The primary structure comprises 312 residues: uncharacterized protein (312 aa).

The next 10 helical transmembrane spans lie at I11 to L31, I46 to V66, I72 to V92, E98 to L118, G128 to V148, G155 to T171, T183 to V203, P221 to L241, M254 to N274, and L277 to I297. 2 consecutive EamA domains span residues F18–V142 and L164–I297.

The protein belongs to the EamA transporter family.

It is found in the cell membrane. This is an uncharacterized protein from Bacillus subtilis (strain 168).